Here is a 162-residue protein sequence, read N- to C-terminus: Class I hydrophobin dewC (162 aa).

A signal peptide spans 1-21; the sequence is MQFTIASLIATAVLGLQMASA. Intrachain disulfides connect cysteine 43–cysteine 119, cysteine 50–cysteine 113, cysteine 51–cysteine 90, and cysteine 120–cysteine 156.

Belongs to the fungal hydrophobin family. In terms of assembly, self-assembles to form functional amyloid fibrils called rodlets. Self-assembly into fibrillar rodlets occurs spontaneously at hydrophobic:hydrophilic interfaces and the rodlets further associate laterally to form amphipathic monolayers.

It is found in the secreted. Its subcellular location is the spore wall. Functionally, aerial growth, conidiation, and dispersal of filamentous fungi in the environment rely upon a capability of their secreting small amphipathic proteins called hydrophobins (HPBs) with low sequence identity. Class I can self-assemble into an outermost layer of rodlet bundles on aerial cell surfaces, conferring cellular hydrophobicity that supports fungal growth, development and dispersal; whereas Class II form highly ordered films at water-air interfaces through intermolecular interactions but contribute nothing to the rodlet structure. DewC is a class I hydrophobin that contributes to the hydrophobicity of the spore surface. The polypeptide is Class I hydrophobin dewC (Emericella nidulans (strain FGSC A4 / ATCC 38163 / CBS 112.46 / NRRL 194 / M139) (Aspergillus nidulans)).